A 795-amino-acid chain; its full sequence is MKKLGRIHPNRQVLAFILMVFLSQVRLEPIRYSVLEETESGSFVAHLTKDLGLGIGELASRSARVLSDDDEQRLQLDRQTGDLLLREKLDREELCGPIEPCVLHFQVFLEMPVQFFQGELLIQDINDHSPVFPEREVLLKILENSQPGTLFPLLIAEDLDVGSNGLQKYTISPNSHFHILTRNHSEGKKYPDLVQDKPLDREEQPEFSLTLVALDGGSPPRSGTVMVRILIMDINDNAPEFVHTPYGVQVLENSPLDSPIVRVLARDIDAGNFGSVSYGLFQASDEIKQTFSINEVTGEILLKKKLDFEKIKSYHVEIEATDGGGLSGKGTVVIEVVDVNDNPPELIISSLTSSIPENAPETVVSIFRIRDRDSGENGKMICSIPDNLPFILKPTLKNFYTLVTERPLDRETSAEYNITITVTDLGTPRLKTQQSITVQVSDVNDNAPAFAQTSYTLFVRENNSPALHIGSVSATDRDSGTNAQVTYSLLPPQDPHLPLSSLVSINADNGHLFALRSLDYEALQAFEFRVGASDRGSPALSSEALVRVLVLDANDNSPFVLYPLQNGSAPCTELVPRAAEPGYLVTKVVAVDGDSGQNAWLSYQLLKATEPGLFGVWAHNGEVRTARLLSERDAAKHRLVVLVKDNGEPPRSATATLHVLLVDGFSQPYLPLPEAAPAQSQADSLTVYLVVALASVSSLFLFSVLLFVAVRLCRRSRAASVGRCSVPEGPFPGHLVDVSGTGTLSQSYQYEVCLTGDSGTGEFKFLKPIFPNLLVQDTGREVKENPKFRNSLVFS.

The first 27 residues, 1-27, serve as a signal peptide directing secretion; it reads MKKLGRIHPNRQVLAFILMVFLSQVRL. Residues 28 to 689 lie on the Extracellular side of the membrane; sequence EPIRYSVLEE…SQADSLTVYL (662 aa). 5 consecutive Cadherin domains span residues 34-132, 137-241, 246-346, 351-450, and 455-560; these read VLEE…SPVF, VLLK…APEF, YGVQ…PPEL, LTSS…APAF, and YTLF…SPFV. Asn183 is a glycosylation site (N-linked (GlcNAc...) asparagine). N-linked (GlcNAc...) asparagine glycosylation occurs at Asn417. Residue Asn566 is glycosylated (N-linked (GlcNAc...) asparagine). One can recognise a Cadherin 6 domain in the interval 567–670; the sequence is GSAPCTELVP…LVDGFSQPYL (104 aa). Residues 690–710 form a helical membrane-spanning segment; sequence VVALASVSSLFLFSVLLFVAV. At 711–795 the chain is on the cytoplasmic side; the sequence is RLCRRSRAAS…PKFRNSLVFS (85 aa).

It is found in the cell membrane. Potential calcium-dependent cell-adhesion protein. May be involved in the establishment and maintenance of specific neuronal connections in the brain. This chain is Protocadherin beta-4 (PCDHB4), found in Pan troglodytes (Chimpanzee).